Consider the following 112-residue polypeptide: Larval cuticle protein 4 (112 aa).

The signal sequence occupies residues 1 to 16 (MFKILLVCALVALVAA). The Chitin-binding type R&amp;R domain occupies 31–92 (ADGFVSKLVL…PQSDLLPTPP (62 aa)).

In terms of biological role, component of the larval cuticle. The chain is Larval cuticle protein 4 (Lcp4) from Drosophila melanogaster (Fruit fly).